The following is a 438-amino-acid chain: GTPase Der (438 aa).

2 consecutive EngA-type G domains span residues 3–168 (PLIA…PCPE) and 179–354 (IKLA…INRR). Residues 9-16 (GRPNVGKS), 56-60 (DTGGY), 120-123 (NKVD), 185-192 (GRPNVGKS), 232-236 (DTAGL), and 297-300 (NKWD) contribute to the GTP site. The region spanning 355–438 (QKISTSNLNR…LPITMRFLRK (84 aa)) is the KH-like domain.

This sequence belongs to the TRAFAC class TrmE-Era-EngA-EngB-Septin-like GTPase superfamily. EngA (Der) GTPase family. As to quaternary structure, associates with the 50S ribosomal subunit.

In terms of biological role, GTPase that plays an essential role in the late steps of ribosome biogenesis. This Chlorobaculum parvum (strain DSM 263 / NCIMB 8327) (Chlorobium vibrioforme subsp. thiosulfatophilum) protein is GTPase Der.